The primary structure comprises 582 residues: Glutaredoxin domain-containing cysteine-rich protein CG12206 (582 aa).

The span at C217–D227 shows a compositional bias: polar residues. Disordered regions lie at residues C217–P244 and E260–S300. Low complexity predominate over residues S291–S300. One can recognise a Glutaredoxin domain in the interval N423 to A528.

The protein belongs to the GRXCR1 family.

This Drosophila melanogaster (Fruit fly) protein is Glutaredoxin domain-containing cysteine-rich protein CG12206.